Here is a 249-residue protein sequence, read N- to C-terminus: uncharacterized protein (249 aa).

It is found in the cytoplasm. Its subcellular location is the nucleus. This is an uncharacterized protein from Schizosaccharomyces pombe (strain 972 / ATCC 24843) (Fission yeast).